The primary structure comprises 139 residues: ATP synthase epsilon chain 2 (139 aa).

The protein belongs to the ATPase epsilon chain family. In terms of assembly, F-type ATPases have 2 components, CF(1) - the catalytic core - and CF(0) - the membrane proton channel. CF(1) has five subunits: alpha(3), beta(3), gamma(1), delta(1), epsilon(1). CF(0) has three main subunits: a, b and c.

It is found in the cell inner membrane. Its function is as follows. Produces ATP from ADP in the presence of a proton gradient across the membrane. The polypeptide is ATP synthase epsilon chain 2 (Paraburkholderia xenovorans (strain LB400)).